The chain runs to 200 residues: MAKFIQHIGLVAPLDAANVDTDAIIPKQFLQKVTRTGFGQHLFNDWRFLDDAGKVPNPDFVLNLPRYQGATILLARENFGCGSSREHAPWALTDFGFKVVIAPSFADIFYGNAFNNQLLPVTLSEADIDTLFQLVKENEGIEFVVDLEQQTVNAGGKSYAFEIDPFRRHCMINGLDSIGLTLQHEHNISAYEKQQPEFLR.

The protein belongs to the LeuD family. LeuD type 1 subfamily. In terms of assembly, heterodimer of LeuC and LeuD.

It carries out the reaction (2R,3S)-3-isopropylmalate = (2S)-2-isopropylmalate. It participates in amino-acid biosynthesis; L-leucine biosynthesis; L-leucine from 3-methyl-2-oxobutanoate: step 2/4. Its function is as follows. Catalyzes the isomerization between 2-isopropylmalate and 3-isopropylmalate, via the formation of 2-isopropylmaleate. In Yersinia pseudotuberculosis serotype I (strain IP32953), this protein is 3-isopropylmalate dehydratase small subunit.